The following is a 287-amino-acid chain: MPANQTRSRARERNNVLNRPEFMSLNQPIKSGGGGGGGESRGTARRPSQRQQQNQQQQGDNPQPENNKDKKELPEEDCMQLNPSFKGIAMNSLLAIDICMSKRLGVCAHPSSSWGSVRSMVKLLALTGHGIPWVFGTIVCLMRSNTLAGQEVLVNLLLALLLDVMTVSGMQKLVKRKGPWEMPPGFFDYLAMDIYSFPAAHASRAVMVSKFLLAHLVLAVPLRILLVLWAILVGISRVLLGRHHLTDVGCGFALGFLHYSLVEMVWLSSNTCQTLISIGTFNWSPLY.

Positions 1-75 (MPANQTRSRA…NNKDKKELPE (75 aa)) are disordered. Over 1-120 (MPANQTRSRA…SSSWGSVRSM (120 aa)) the chain is Cytoplasmic. The segment covering 31–40 (SGGGGGGGES) has biased composition (gly residues). A compositionally biased stretch (low complexity) spans 49 to 65 (QRQQQNQQQQGDNPQPE). Residues 121–141 (VKLLALTGHGIPWVFGTIVCL) form a helical membrane-spanning segment. Topologically, residues 142-146 (MRSNT) are extracellular. The helical transmembrane segment at 147–167 (LAGQEVLVNLLLALLLDVMTV) threads the bilayer. The Cytoplasmic segment spans residues 168–215 (SGMQKLVKRKGPWEMPPGFFDYLAMDIYSFPAAHASRAVMVSKFLLAH). Residues 216–236 (LVLAVPLRILLVLWAILVGIS) form a helical membrane-spanning segment. The Extracellular segment spans residues 237-247 (RVLLGRHHLTD). Residues 248-268 (VGCGFALGFLHYSLVEMVWLS) form a helical membrane-spanning segment. The Cytoplasmic segment spans residues 269–287 (SNTCQTLISIGTFNWSPLY).

This sequence belongs to the PA-phosphatase related phosphoesterase family.

The protein localises to the nucleus envelope. The protein resides in the endoplasmic reticulum membrane. It is found in the membrane. Its function is as follows. Plays a role as negative regulator of myoblast differentiation, in part through effects on MTOR signaling. Has no detectable enzymatic activity. This is Inactive phospholipid phosphatase 7 from Danio rerio (Zebrafish).